The chain runs to 152 residues: Small ribosomal subunit protein uS11B (152 aa).

Residues 131–152 (EDVTPIPSDSTRRKGGRRGRRL) are disordered. Residues 143-152 (RKGGRRGRRL) show a composition bias toward basic residues.

The protein belongs to the universal ribosomal protein uS11 family.

This is Small ribosomal subunit protein uS11B from Anopheles gambiae (African malaria mosquito).